The sequence spans 327 residues: MRHLLSTADLSRADALAVLDTAEEMAAVNQREVKKLPALRGRTVVNLFLEDSTRTRISFEAAAKRLSADVINFSAKGSSVSKGESLKDTVQTLEAIGADAIVMRHWSSGAARQLADSGWVRSAVVNAGDGTHEHPTQALLDAFTLRRRLAAATGEDLVGQDLTGMRVVIVGDILHSRVARSNVWLLSTLGAQVTLAAPPTLLPVGVAAWPCQVTYSLDEALDASPDAVMMLRVQAERMGGAFFPSAGEYTRTWGLTDDRFARLTAGRGALLDEPVVMHPGPMNRGLEISPAAADSPRNTALEQVANGVSVRMAVLHLVLNHDQEVRP.

Arg-54 and Thr-55 together coordinate carbamoyl phosphate. Lys-82 serves as a coordination point for L-aspartate. Residues Arg-104, His-134, and Gln-137 each contribute to the carbamoyl phosphate site. The L-aspartate site is built by Arg-177 and Arg-232. Carbamoyl phosphate is bound by residues Gly-280 and Pro-281.

This sequence belongs to the aspartate/ornithine carbamoyltransferase superfamily. ATCase family. Heterododecamer (2C3:3R2) of six catalytic PyrB chains organized as two trimers (C3), and six regulatory PyrI chains organized as three dimers (R2).

The catalysed reaction is carbamoyl phosphate + L-aspartate = N-carbamoyl-L-aspartate + phosphate + H(+). The protein operates within pyrimidine metabolism; UMP biosynthesis via de novo pathway; (S)-dihydroorotate from bicarbonate: step 2/3. Its function is as follows. Catalyzes the condensation of carbamoyl phosphate and aspartate to form carbamoyl aspartate and inorganic phosphate, the committed step in the de novo pyrimidine nucleotide biosynthesis pathway. This is Aspartate carbamoyltransferase catalytic subunit from Micrococcus luteus (strain ATCC 4698 / DSM 20030 / JCM 1464 / CCM 169 / CCUG 5858 / IAM 1056 / NBRC 3333 / NCIMB 9278 / NCTC 2665 / VKM Ac-2230) (Micrococcus lysodeikticus).